The sequence spans 607 residues: Elongation factor 4 (607 aa).

Positions 11-193 (SKIRNFSIIA…QIVEKVPAPT (183 aa)) constitute a tr-type G domain. Residues 23-28 (DHGKST) and 140-143 (NKID) each bind GTP.

It belongs to the TRAFAC class translation factor GTPase superfamily. Classic translation factor GTPase family. LepA subfamily.

The protein localises to the cell membrane. It catalyses the reaction GTP + H2O = GDP + phosphate + H(+). Its function is as follows. Required for accurate and efficient protein synthesis under certain stress conditions. May act as a fidelity factor of the translation reaction, by catalyzing a one-codon backward translocation of tRNAs on improperly translocated ribosomes. Back-translocation proceeds from a post-translocation (POST) complex to a pre-translocation (PRE) complex, thus giving elongation factor G a second chance to translocate the tRNAs correctly. Binds to ribosomes in a GTP-dependent manner. The polypeptide is Elongation factor 4 (Bacillus anthracis (strain A0248)).